A 79-amino-acid chain; its full sequence is Small ribosomal subunit protein bS18 (79 aa).

Belongs to the bacterial ribosomal protein bS18 family. As to quaternary structure, part of the 30S ribosomal subunit. Forms a tight heterodimer with protein bS6.

Its function is as follows. Binds as a heterodimer with protein bS6 to the central domain of the 16S rRNA, where it helps stabilize the platform of the 30S subunit. The chain is Small ribosomal subunit protein bS18 (rpsR) from Bacillus subtilis (strain 168).